The following is a 702-amino-acid chain: Vacuolar protein sorting-associated protein 52 homolog (702 aa).

The stretch at 505–535 (KEMGAKMEAVLENSEDSIEQLLTRMSAMQQT) forms a coiled coil.

It belongs to the VPS52 family. As to quaternary structure, component of the Golgi-associated retrograde protein (GARP) complex, also called VFT (VPS fifty-three) complex, composed of vps-51, vps-52, vps-53 and vps-54. Within the complex interacts with vps-53 and vps-54. Interacts with the small GTPases rab-6.1 and rab-6.2. In terms of tissue distribution, ubiquitously expressed, with particularly strong expression in neuronal cells. Specifically expressed in head and tail neurons and in the pharynx and ventral cord motor neurons.

The protein resides in the golgi apparatus. It localises to the trans-Golgi network. Its subcellular location is the perikaryon. The protein localises to the cytoplasm. It is found in the perinuclear region. Its function is as follows. Acts as a component of the GARP complex that is involved in retrograde transport from early and late endosomes to the trans-Golgi network (TGN). The GARP complex facilitates tethering as well as SNARE complex assembly at the Golgi. Plays a role in the trafficking of cargo to dense-core vesicles, probably through association with the EARP-interacting protein eipr-1. Important for neuronal function. This chain is Vacuolar protein sorting-associated protein 52 homolog, found in Caenorhabditis elegans.